The primary structure comprises 233 residues: Hydroxyacylglutathione hydrolase (233 aa).

Residues His52, His54, Asp56, His57, His108, Asp125, and His163 each coordinate Zn(2+).

Belongs to the metallo-beta-lactamase superfamily. Glyoxalase II family. As to quaternary structure, monomer. The cofactor is Zn(2+).

It catalyses the reaction an S-(2-hydroxyacyl)glutathione + H2O = a 2-hydroxy carboxylate + glutathione + H(+). It participates in secondary metabolite metabolism; methylglyoxal degradation; (R)-lactate from methylglyoxal: step 2/2. In terms of biological role, thiolesterase that catalyzes the hydrolysis of S-D-lactoyl-glutathione to form glutathione and D-lactic acid. This Histophilus somni (strain 2336) (Haemophilus somnus) protein is Hydroxyacylglutathione hydrolase.